The sequence spans 501 residues: 4,4'-diapophytoene desaturase (4,4'-diaponeurosporene-forming) (501 aa).

5 to 17 (VVGAGVTGLAAAA) is a binding site for FAD.

Belongs to the carotenoid/retinoid oxidoreductase family. CrtN subfamily.

It carries out the reaction 15-cis-4,4'-diapophytoene + 3 FAD + 3 H(+) = all-trans-4,4'-diaponeurosporene + 3 FADH2. Its pathway is carotenoid biosynthesis; staphyloxanthin biosynthesis; staphyloxanthin from farnesyl diphosphate: step 2/5. Its function is as follows. Involved in the biosynthesis of the yellow-orange carotenoid staphyloxanthin, which plays a role in the virulence via its protective function against oxidative stress. Catalyzes three successive dehydrogenation reactions that lead to the introduction of three double bonds into 4,4'-diapophytoene (dehydrosqualene), with 4,4'-diapophytofluene and 4,4'-diapo-zeta-carotene as intermediates, and 4,4'-diaponeurosporene (the major deep-yellow pigment in staphylococci strains) as the end product. The sequence is that of 4,4'-diapophytoene desaturase (4,4'-diaponeurosporene-forming) from Staphylococcus haemolyticus (strain JCSC1435).